The sequence spans 344 residues: Lipase chaperone (344 aa).

The chain crosses the membrane as a helical span at residues 14–34 (AAIYGVVGLAAIAGVAMWSGA).

The protein belongs to the lipase chaperone family.

It is found in the cell inner membrane. Functionally, may be involved in the folding of the extracellular lipase during its passage through the periplasm. This is Lipase chaperone from Burkholderia cenocepacia (strain HI2424).